A 512-amino-acid chain; its full sequence is Zinc metalloprotease mde10 (512 aa).

The signal sequence occupies residues 1-15; the sequence is MRLVLLFSCVLAVSS. N-linked (GlcNAc...) asparagine glycosylation is present at Asn35. One can recognise a Peptidase M12B domain in the interval 65-306; that stretch reads QTLWIGVVAD…KYVSLSCLSK (242 aa). His229 contacts Zn(2+). The active site involves Glu230. Positions 233 and 239 each coordinate Zn(2+). Disulfide bonds link Cys246-Cys254 and Cys374-Cys394. The Disintegrin domain occupies 315 to 402; sequence LGTCGNGIVE…KCPVDENWDD (88 aa). An N-linked (GlcNAc...) asparagine glycan is attached at Asn432.

The cofactor is Zn(2+). In terms of processing, glycosylated.

Its subcellular location is the endoplasmic reticulum. It localises to the spore wall. Its function is as follows. Has a role in the development of the spore envelope. The chain is Zinc metalloprotease mde10 (mde10) from Schizosaccharomyces pombe (strain 972 / ATCC 24843) (Fission yeast).